Reading from the N-terminus, the 191-residue chain is dCTP deaminase, dUMP-forming (191 aa).

DCTP is bound by residues 101–106, D119, 127–129, Q148, Y162, and Q174; these read KSSLGR and TLE. E129 acts as the Proton donor/acceptor in catalysis.

Belongs to the dCTP deaminase family. As to quaternary structure, homotrimer.

The enzyme catalyses dCTP + 2 H2O = dUMP + NH4(+) + diphosphate. It functions in the pathway pyrimidine metabolism; dUMP biosynthesis; dUMP from dCTP: step 1/1. In terms of biological role, bifunctional enzyme that catalyzes both the deamination of dCTP to dUTP and the hydrolysis of dUTP to dUMP without releasing the toxic dUTP intermediate. This is dCTP deaminase, dUMP-forming from Streptomyces avermitilis (strain ATCC 31267 / DSM 46492 / JCM 5070 / NBRC 14893 / NCIMB 12804 / NRRL 8165 / MA-4680).